Here is a 407-residue protein sequence, read N- to C-terminus: Serine hydroxymethyltransferase (407 aa).

Residues Y51 and 94–95 (GS) contribute to the pyridoxal 5'-phosphate site. Residues L117 and 121 to 123 (GHL) contribute to the (6S)-5,6,7,8-tetrahydrofolate site. S172, H200, and H225 together coordinate pyridoxal 5'-phosphate. K226 is subject to N6-(pyridoxal phosphate)lysine. E242 is a (6S)-5,6,7,8-tetrahydrofolate binding site. G258 provides a ligand contact to pyridoxal 5'-phosphate.

It belongs to the SHMT family. Homodimer. Requires pyridoxal 5'-phosphate as cofactor.

Its subcellular location is the cytoplasm. The catalysed reaction is (6R)-5,10-methylene-5,6,7,8-tetrahydrofolate + glycine + H2O = (6S)-5,6,7,8-tetrahydrofolate + L-serine. It participates in one-carbon metabolism; tetrahydrofolate interconversion. Its pathway is amino-acid biosynthesis; glycine biosynthesis; glycine from L-serine: step 1/1. Catalyzes the reversible interconversion of serine and glycine with tetrahydrofolate (THF) serving as the one-carbon carrier. This reaction serves as the major source of one-carbon groups required for the biosynthesis of purines, thymidylate, methionine, and other important biomolecules. Also exhibits THF-independent aldolase activity toward beta-hydroxyamino acids, producing glycine and aldehydes, via a retro-aldol mechanism. The polypeptide is Serine hydroxymethyltransferase (Thermus thermophilus (strain ATCC 27634 / DSM 579 / HB8)).